Reading from the N-terminus, the 182-residue chain is Adenine phosphoribosyltransferase (182 aa).

The protein belongs to the purine/pyrimidine phosphoribosyltransferase family. Homodimer.

Its subcellular location is the cytoplasm. The enzyme catalyses AMP + diphosphate = 5-phospho-alpha-D-ribose 1-diphosphate + adenine. It participates in purine metabolism; AMP biosynthesis via salvage pathway; AMP from adenine: step 1/1. Functionally, catalyzes a salvage reaction resulting in the formation of AMP, that is energically less costly than de novo synthesis. This chain is Adenine phosphoribosyltransferase, found in Pseudomonas paraeruginosa (strain DSM 24068 / PA7) (Pseudomonas aeruginosa (strain PA7)).